The chain runs to 360 residues: Peptide chain release factor 1 (360 aa).

Glutamine 237 is subject to N5-methylglutamine.

It belongs to the prokaryotic/mitochondrial release factor family. Methylated by PrmC. Methylation increases the termination efficiency of RF1.

The protein resides in the cytoplasm. Peptide chain release factor 1 directs the termination of translation in response to the peptide chain termination codons UAG and UAA. The protein is Peptide chain release factor 1 of Pseudomonas putida (strain W619).